The sequence spans 280 residues: Ribosomal RNA small subunit methyltransferase A (280 aa).

S-adenosyl-L-methionine contacts are provided by Asn-18, Leu-20, Gly-45, Glu-66, Asp-89, and Asn-110.

The protein belongs to the class I-like SAM-binding methyltransferase superfamily. rRNA adenine N(6)-methyltransferase family. RsmA subfamily.

Its subcellular location is the cytoplasm. The catalysed reaction is adenosine(1518)/adenosine(1519) in 16S rRNA + 4 S-adenosyl-L-methionine = N(6)-dimethyladenosine(1518)/N(6)-dimethyladenosine(1519) in 16S rRNA + 4 S-adenosyl-L-homocysteine + 4 H(+). Functionally, specifically dimethylates two adjacent adenosines (A1518 and A1519) in the loop of a conserved hairpin near the 3'-end of 16S rRNA in the 30S particle. May play a critical role in biogenesis of 30S subunits. The protein is Ribosomal RNA small subunit methyltransferase A of Cupriavidus necator (strain ATCC 17699 / DSM 428 / KCTC 22496 / NCIMB 10442 / H16 / Stanier 337) (Ralstonia eutropha).